The sequence spans 325 residues: Biotin synthase (325 aa).

Residues 43 to 262 enclose the Radical SAM core domain; that stretch reads CSVETAQLLS…VAVARLLMPR (220 aa). The [4Fe-4S] cluster site is built by Cys-58, Cys-62, and Cys-65. [2Fe-2S] cluster is bound by residues Cys-102, Cys-133, Cys-193, and Arg-266.

Belongs to the radical SAM superfamily. Biotin synthase family. Homodimer. It depends on [4Fe-4S] cluster as a cofactor. The cofactor is [2Fe-2S] cluster.

It catalyses the reaction (4R,5S)-dethiobiotin + (sulfur carrier)-SH + 2 reduced [2Fe-2S]-[ferredoxin] + 2 S-adenosyl-L-methionine = (sulfur carrier)-H + biotin + 2 5'-deoxyadenosine + 2 L-methionine + 2 oxidized [2Fe-2S]-[ferredoxin]. It functions in the pathway cofactor biosynthesis; biotin biosynthesis; biotin from 7,8-diaminononanoate: step 2/2. In terms of biological role, catalyzes the conversion of dethiobiotin (DTB) to biotin by the insertion of a sulfur atom into dethiobiotin via a radical-based mechanism. The sequence is that of Biotin synthase from Azorhizobium caulinodans (strain ATCC 43989 / DSM 5975 / JCM 20966 / LMG 6465 / NBRC 14845 / NCIMB 13405 / ORS 571).